A 262-amino-acid polypeptide reads, in one-letter code: Ribosomal RNA small subunit methyltransferase A (262 aa).

6 residues coordinate S-adenosyl-L-methionine: histidine 16, leucine 18, glycine 43, glutamate 64, aspartate 89, and asparagine 109.

This sequence belongs to the class I-like SAM-binding methyltransferase superfamily. rRNA adenine N(6)-methyltransferase family. RsmA subfamily.

The protein resides in the cytoplasm. It carries out the reaction adenosine(1518)/adenosine(1519) in 16S rRNA + 4 S-adenosyl-L-methionine = N(6)-dimethyladenosine(1518)/N(6)-dimethyladenosine(1519) in 16S rRNA + 4 S-adenosyl-L-homocysteine + 4 H(+). Its function is as follows. Specifically dimethylates two adjacent adenosines (A1518 and A1519) in the loop of a conserved hairpin near the 3'-end of 16S rRNA in the 30S particle. May play a critical role in biogenesis of 30S subunits. In Xanthomonas campestris pv. campestris (strain B100), this protein is Ribosomal RNA small subunit methyltransferase A.